Consider the following 649-residue polypeptide: Acetyl-coenzyme A synthetase (649 aa).

CoA-binding positions include 189–192 (RGGK), Thr311, and Asn335. Residues 387–389 (GEP), 411–416 (DTWWQT), Asp500, and Arg515 contribute to the ATP site. Ser523 contacts CoA. ATP is bound at residue Arg526. Mg(2+) is bound by residues Val537, His539, and Val542. Arg584 contacts CoA. Lys609 carries the post-translational modification N6-acetyllysine.

It belongs to the ATP-dependent AMP-binding enzyme family. It depends on Mg(2+) as a cofactor. In terms of processing, acetylated. Deacetylation by the SIR2-homolog deacetylase activates the enzyme.

It catalyses the reaction acetate + ATP + CoA = acetyl-CoA + AMP + diphosphate. In terms of biological role, catalyzes the conversion of acetate into acetyl-CoA (AcCoA), an essential intermediate at the junction of anabolic and catabolic pathways. AcsA undergoes a two-step reaction. In the first half reaction, AcsA combines acetate with ATP to form acetyl-adenylate (AcAMP) intermediate. In the second half reaction, it can then transfer the acetyl group from AcAMP to the sulfhydryl group of CoA, forming the product AcCoA. This chain is Acetyl-coenzyme A synthetase, found in Sinorhizobium medicae (strain WSM419) (Ensifer medicae).